The sequence spans 139 residues: Glucanase inhibitor protein 3 (139 aa).

Residues 1 to 138 form the Peptidase S1 domain; that stretch reads VLTLEKPSKF…GIEWINSVIK (138 aa). 2 disulfide bridges follow: C61–C73 and C83–C114.

This sequence belongs to the peptidase S1 family.

It is found in the secreted. Secreted effector that suppresses host plant glucan elicitor-mediated defense responses. Targets host endoglucanases and inhibits the endoglucanase-mediated release of elicitor-active glucan oligosaccharides from P.sojae cell walls. This is Glucanase inhibitor protein 3 from Phytophthora sojae (Soybean stem and root rot agent).